The sequence spans 99 residues: uncharacterized protein (99 aa).

Residues Met-1 to Phe-99 form a disordered region. Residues Gln-19–Glu-29 show a composition bias toward polar residues.

This is an uncharacterized protein from Schizosaccharomyces pombe (strain 972 / ATCC 24843) (Fission yeast).